The following is a 184-amino-acid chain: GTP cyclohydrolase 1 (184 aa).

Residues Cys-75, His-78, and Cys-146 each coordinate Zn(2+).

The protein belongs to the GTP cyclohydrolase I family. Homomer.

It carries out the reaction GTP + H2O = 7,8-dihydroneopterin 3'-triphosphate + formate + H(+). Its pathway is cofactor biosynthesis; 7,8-dihydroneopterin triphosphate biosynthesis; 7,8-dihydroneopterin triphosphate from GTP: step 1/1. This chain is GTP cyclohydrolase 1, found in Teredinibacter turnerae (strain ATCC 39867 / T7901).